The primary structure comprises 156 residues: Cytochrome c-type biogenesis protein CcmE (156 aa).

Over 1-8 (MNPLRRKR) the chain is Cytoplasmic. The chain crosses the membrane as a helical; Signal-anchor for type II membrane protein span at residues 9–29 (LLIILAILAGVGIAVGLAMSA). Topologically, residues 30–156 (LRENINLFYT…RIRSLPRRAK (127 aa)) are periplasmic. Residues H124 and Y128 each coordinate heme.

The protein belongs to the CcmE/CycJ family.

Its subcellular location is the cell inner membrane. Its function is as follows. Heme chaperone required for the biogenesis of c-type cytochromes. Transiently binds heme delivered by CcmC and transfers the heme to apo-cytochromes in a process facilitated by CcmF and CcmH. This is Cytochrome c-type biogenesis protein CcmE from Pseudomonas fluorescens.